The primary structure comprises 322 residues: Phosphatidylserine decarboxylase proenzyme (322 aa).

Catalysis depends on charge relay system; for autoendoproteolytic cleavage activity residues aspartate 90, histidine 147, and serine 254. Serine 254 serves as the catalytic Schiff-base intermediate with substrate; via pyruvic acid; for decarboxylase activity. Serine 254 is subject to Pyruvic acid (Ser); by autocatalysis. The tract at residues 294–322 is disordered; that stretch reads EVEPVPLPEEEIKAEHDASPLVDDKKDET. The segment covering 303–322 has biased composition (basic and acidic residues); that stretch reads EEIKAEHDASPLVDDKKDET.

Belongs to the phosphatidylserine decarboxylase family. PSD-B subfamily. Prokaryotic type I sub-subfamily. As to quaternary structure, heterodimer of a large membrane-associated beta subunit and a small pyruvoyl-containing alpha subunit. The cofactor is pyruvate. Is synthesized initially as an inactive proenzyme. Formation of the active enzyme involves a self-maturation process in which the active site pyruvoyl group is generated from an internal serine residue via an autocatalytic post-translational modification. Two non-identical subunits are generated from the proenzyme in this reaction, and the pyruvate is formed at the N-terminus of the alpha chain, which is derived from the carboxyl end of the proenzyme. The autoendoproteolytic cleavage occurs by a canonical serine protease mechanism, in which the side chain hydroxyl group of the serine supplies its oxygen atom to form the C-terminus of the beta chain, while the remainder of the serine residue undergoes an oxidative deamination to produce ammonia and the pyruvoyl prosthetic group on the alpha chain. During this reaction, the Ser that is part of the protease active site of the proenzyme becomes the pyruvoyl prosthetic group, which constitutes an essential element of the active site of the mature decarboxylase.

Its subcellular location is the cell membrane. It carries out the reaction a 1,2-diacyl-sn-glycero-3-phospho-L-serine + H(+) = a 1,2-diacyl-sn-glycero-3-phosphoethanolamine + CO2. The protein operates within phospholipid metabolism; phosphatidylethanolamine biosynthesis; phosphatidylethanolamine from CDP-diacylglycerol: step 2/2. Catalyzes the formation of phosphatidylethanolamine (PtdEtn) from phosphatidylserine (PtdSer). The polypeptide is Phosphatidylserine decarboxylase proenzyme (Salmonella arizonae (strain ATCC BAA-731 / CDC346-86 / RSK2980)).